The following is a 313-amino-acid chain: Ribosomal RNA small subunit methyltransferase H (313 aa).

Residues 34-36 (GGH), aspartate 55, phenylalanine 82, aspartate 103, and glutamine 110 each bind S-adenosyl-L-methionine.

Belongs to the methyltransferase superfamily. RsmH family.

Its subcellular location is the cytoplasm. It catalyses the reaction cytidine(1402) in 16S rRNA + S-adenosyl-L-methionine = N(4)-methylcytidine(1402) in 16S rRNA + S-adenosyl-L-homocysteine + H(+). Functionally, specifically methylates the N4 position of cytidine in position 1402 (C1402) of 16S rRNA. This is Ribosomal RNA small subunit methyltransferase H from Pelobacter propionicus (strain DSM 2379 / NBRC 103807 / OttBd1).